The following is a 947-amino-acid chain: Protocadherin alpha-4 (947 aa).

A signal peptide spans 1 to 29 (MEFSWGSGQESQRLLLSFLFLAIWEPGNS). Cadherin domains follow at residues 30 to 133 (QLHY…PPTF), 134 to 242 (PTTQ…SPVF), 243 to 350 (DRSL…APEL), 351 to 455 (EFKS…APAF), 456 to 565 (AQPE…APTL), and 573 to 681 (SGGI…APSR). At 30 to 697 (QLHYSIPEEA…NAEASLVDVN (668 aa)) the chain is on the extracellular side. A disulfide bridge connects residues C96 and C102. N-linked (GlcNAc...) asparagine glycans are attached at residues N257 and N265. N548 is a glycosylation site (N-linked (GlcNAc...) asparagine). A helical membrane pass occupies residues 698-718 (VYLIIAICAVSSLLVLTLLLY). Residues 719 to 947 (SALRCSTVPS…GNSTTDNSDQ (229 aa)) lie on the Cytoplasmic side of the membrane. 6 PXXP repeats span residues 734-737 (PPKP), 774-777 (PSLS), 796-799 (PRQP), 829-832 (PGGP), 870-873 (PGNP), and 888-891 (PGSP). Residues 734–891 (PPKPVMVCSS…PDKFIIPGSP (158 aa)) are 6 X 4 AA repeats of P-X-X-P. Residues 738–947 (VMVCSSAVGS…GNSTTDNSDQ (210 aa)) are required for interaction with FYN. Disordered stretches follow at residues 761-805 (GEYP…DWRY) and 824-853 (ILRA…EVSP). Positions 897–947 (RQESANNQIDKSDFITFGKKEETKKKKKKKKGNKTQEKKEKGNSTTDNSDQ) are disordered. The segment covering 906 to 920 (DKSDFITFGKKEETK) has biased composition (basic and acidic residues).

Forms homodimers in trans (molecules expressed by two different cells). Forms promiscuous heterodimers in cis (at the plasma membrane of the same cell) with other protocadherins. Interacts with FYN. In terms of tissue distribution, detected in brain.

The protein resides in the cell membrane. Functionally, calcium-dependent cell-adhesion protein involved in cells self-recognition and non-self discrimination. Thereby, it is involved in the establishment and maintenance of specific neuronal connections in the brain. The protein is Protocadherin alpha-4 of Rattus norvegicus (Rat).